Consider the following 232-residue polypeptide: Phosphatidylserine decarboxylase proenzyme (232 aa).

The Schiff-base intermediate with substrate; via pyruvic acid role is filled by serine 190. Serine 190 carries the post-translational modification Pyruvic acid (Ser); by autocatalysis.

Belongs to the phosphatidylserine decarboxylase family. PSD-A subfamily. As to quaternary structure, heterodimer of a large membrane-associated beta subunit and a small pyruvoyl-containing alpha subunit. Requires pyruvate as cofactor. In terms of processing, is synthesized initially as an inactive proenzyme. Formation of the active enzyme involves a self-maturation process in which the active site pyruvoyl group is generated from an internal serine residue via an autocatalytic post-translational modification. Two non-identical subunits are generated from the proenzyme in this reaction, and the pyruvate is formed at the N-terminus of the alpha chain, which is derived from the carboxyl end of the proenzyme. The post-translation cleavage follows an unusual pathway, termed non-hydrolytic serinolysis, in which the side chain hydroxyl group of the serine supplies its oxygen atom to form the C-terminus of the beta chain, while the remainder of the serine residue undergoes an oxidative deamination to produce ammonia and the pyruvoyl prosthetic group on the alpha chain.

Its subcellular location is the cell membrane. It carries out the reaction a 1,2-diacyl-sn-glycero-3-phospho-L-serine + H(+) = a 1,2-diacyl-sn-glycero-3-phosphoethanolamine + CO2. It functions in the pathway phospholipid metabolism; phosphatidylethanolamine biosynthesis; phosphatidylethanolamine from CDP-diacylglycerol: step 2/2. Its function is as follows. Catalyzes the formation of phosphatidylethanolamine (PtdEtn) from phosphatidylserine (PtdSer). In Rhodopseudomonas palustris (strain ATCC BAA-98 / CGA009), this protein is Phosphatidylserine decarboxylase proenzyme.